Consider the following 246-residue polypeptide: Pyridoxine 5'-phosphate synthase (246 aa).

Residue Asn-12 coordinates 3-amino-2-oxopropyl phosphate. Residue 14–15 (DH) coordinates 1-deoxy-D-xylulose 5-phosphate. A 3-amino-2-oxopropyl phosphate-binding site is contributed by Arg-23. His-48 (proton acceptor) is an active-site residue. 1-deoxy-D-xylulose 5-phosphate-binding residues include Arg-50 and His-55. Glu-75 serves as the catalytic Proton acceptor. Position 105 (Thr-105) interacts with 1-deoxy-D-xylulose 5-phosphate. The Proton donor role is filled by His-196. 3-amino-2-oxopropyl phosphate is bound by residues Gly-197 and 218–219 (GH).

Belongs to the PNP synthase family. Homooctamer; tetramer of dimers.

It localises to the cytoplasm. It catalyses the reaction 3-amino-2-oxopropyl phosphate + 1-deoxy-D-xylulose 5-phosphate = pyridoxine 5'-phosphate + phosphate + 2 H2O + H(+). It functions in the pathway cofactor biosynthesis; pyridoxine 5'-phosphate biosynthesis; pyridoxine 5'-phosphate from D-erythrose 4-phosphate: step 5/5. In terms of biological role, catalyzes the complicated ring closure reaction between the two acyclic compounds 1-deoxy-D-xylulose-5-phosphate (DXP) and 3-amino-2-oxopropyl phosphate (1-amino-acetone-3-phosphate or AAP) to form pyridoxine 5'-phosphate (PNP) and inorganic phosphate. In Thiobacillus denitrificans (strain ATCC 25259 / T1), this protein is Pyridoxine 5'-phosphate synthase.